The primary structure comprises 191 residues: Protein GrpE (191 aa).

The protein belongs to the GrpE family. As to quaternary structure, homodimer.

It localises to the cytoplasm. Participates actively in the response to hyperosmotic and heat shock by preventing the aggregation of stress-denatured proteins, in association with DnaK and GrpE. It is the nucleotide exchange factor for DnaK and may function as a thermosensor. Unfolded proteins bind initially to DnaJ; upon interaction with the DnaJ-bound protein, DnaK hydrolyzes its bound ATP, resulting in the formation of a stable complex. GrpE releases ADP from DnaK; ATP binding to DnaK triggers the release of the substrate protein, thus completing the reaction cycle. Several rounds of ATP-dependent interactions between DnaJ, DnaK and GrpE are required for fully efficient folding. The polypeptide is Protein GrpE (Helicobacter pylori (strain P12)).